A 73-amino-acid polypeptide reads, in one-letter code: Translation initiation factor IF-1 (73 aa).

The 73-residue stretch at 1–73 folds into the S1-like domain; sequence MSEKEAGIEV…SRGRITYRDK (73 aa).

This sequence belongs to the IF-1 family. As to quaternary structure, component of the 30S ribosomal translation pre-initiation complex which assembles on the 30S ribosome in the order IF-2 and IF-3, IF-1 and N-formylmethionyl-tRNA(fMet); mRNA recruitment can occur at any time during PIC assembly.

It is found in the cytoplasm. Its function is as follows. One of the essential components for the initiation of protein synthesis. Stabilizes the binding of IF-2 and IF-3 on the 30S subunit to which N-formylmethionyl-tRNA(fMet) subsequently binds. Helps modulate mRNA selection, yielding the 30S pre-initiation complex (PIC). Upon addition of the 50S ribosomal subunit IF-1, IF-2 and IF-3 are released leaving the mature 70S translation initiation complex. This Anaeromyxobacter dehalogenans (strain 2CP-C) protein is Translation initiation factor IF-1.